The chain runs to 657 residues: uncharacterized protein (657 aa).

An N-terminal signal peptide occupies residues 1–17 (MACVLACVAVLIGAASA).

This is an uncharacterized protein from Orgyia pseudotsugata (Douglas-fir tussock moth).